A 245-amino-acid polypeptide reads, in one-letter code: NAD-dependent protein deacetylase (245 aa).

The Deacetylase sirtuin-type domain maps to 1-245 (MIFVQQFEEV…EFVEGLSSRK (245 aa)). Residues Ala-26, Thr-30, Phe-37, Arg-38, Gln-105, Ile-107, Asp-108, and His-123 each contribute to the NAD(+) site. Residue Phe-37 participates in nicotinamide binding. Positions 107 and 108 each coordinate nicotinamide. His-123 serves as the catalytic Proton acceptor. Residues Cys-131, Cys-134, Cys-151, and Cys-154 each contribute to the Zn(2+) site. 4 residues coordinate NAD(+): Thr-190, Ser-191, Asn-216, and Ile-234.

Belongs to the sirtuin family. Class U subfamily. Zn(2+) serves as cofactor.

The protein localises to the cytoplasm. It catalyses the reaction N(6)-acetyl-L-lysyl-[protein] + NAD(+) + H2O = 2''-O-acetyl-ADP-D-ribose + nicotinamide + L-lysyl-[protein]. Functionally, NAD-dependent protein deacetylase which modulates the activities of several enzymes which are inactive in their acetylated form. The sequence is that of NAD-dependent protein deacetylase from Bacillus cereus (strain ZK / E33L).